The chain runs to 347 residues: D-alanine--D-alanine ligase (347 aa).

The 199-residue stretch at 134–332 (KLYAKDLGVK…LAQSLPKTPK (199 aa)) folds into the ATP-grasp domain. 161 to 216 (LMNFNFPFIIKPNNAGSSLGVNVVKEEKELVYALDGAFEYSKEVLIEPFIQGVKEY) serves as a coordination point for ATP. Residues Asp288, Glu300, and Asn302 each contribute to the Mg(2+) site.

The protein belongs to the D-alanine--D-alanine ligase family. It depends on Mg(2+) as a cofactor. The cofactor is Mn(2+).

It is found in the cytoplasm. It carries out the reaction 2 D-alanine + ATP = D-alanyl-D-alanine + ADP + phosphate + H(+). Its pathway is cell wall biogenesis; peptidoglycan biosynthesis. In terms of biological role, cell wall formation. This Helicobacter pylori (strain ATCC 700392 / 26695) (Campylobacter pylori) protein is D-alanine--D-alanine ligase.